The sequence spans 424 residues: 3-phosphoshikimate 1-carboxyvinyltransferase (424 aa).

The 3-phosphoshikimate site is built by Lys-21, Ser-22, and Arg-26. Position 21 (Lys-21) interacts with phosphoenolpyruvate. Phosphoenolpyruvate contacts are provided by Gly-91 and Arg-119. Residues Ser-164, Gln-166, Asp-310, and Lys-337 each contribute to the 3-phosphoshikimate site. Gln-166 is a phosphoenolpyruvate binding site. Catalysis depends on Asp-310, which acts as the Proton acceptor. Arg-341 and Arg-382 together coordinate phosphoenolpyruvate.

The protein belongs to the EPSP synthase family. In terms of assembly, monomer.

It is found in the cytoplasm. It carries out the reaction 3-phosphoshikimate + phosphoenolpyruvate = 5-O-(1-carboxyvinyl)-3-phosphoshikimate + phosphate. Its pathway is metabolic intermediate biosynthesis; chorismate biosynthesis; chorismate from D-erythrose 4-phosphate and phosphoenolpyruvate: step 6/7. In terms of biological role, catalyzes the transfer of the enolpyruvyl moiety of phosphoenolpyruvate (PEP) to the 5-hydroxyl of shikimate-3-phosphate (S3P) to produce enolpyruvyl shikimate-3-phosphate and inorganic phosphate. This Campylobacter curvus (strain 525.92) protein is 3-phosphoshikimate 1-carboxyvinyltransferase.